The chain runs to 263 residues: 3-deoxy-manno-octulosonate cytidylyltransferase (263 aa).

It belongs to the KdsB family.

The protein localises to the cytoplasm. The enzyme catalyses 3-deoxy-alpha-D-manno-oct-2-ulosonate + CTP = CMP-3-deoxy-beta-D-manno-octulosonate + diphosphate. Its pathway is nucleotide-sugar biosynthesis; CMP-3-deoxy-D-manno-octulosonate biosynthesis; CMP-3-deoxy-D-manno-octulosonate from 3-deoxy-D-manno-octulosonate and CTP: step 1/1. It participates in bacterial outer membrane biogenesis; lipopolysaccharide biosynthesis. Functionally, activates KDO (a required 8-carbon sugar) for incorporation into bacterial lipopolysaccharide in Gram-negative bacteria. This Burkholderia mallei (strain NCTC 10229) protein is 3-deoxy-manno-octulosonate cytidylyltransferase.